The following is a 429-amino-acid chain: Ribosomal RNA small subunit methyltransferase B (429 aa).

Residues 254-260 (CAAPGGK), aspartate 277, aspartate 303, and aspartate 322 contribute to the S-adenosyl-L-methionine site. Catalysis depends on cysteine 375, which acts as the Nucleophile.

Belongs to the class I-like SAM-binding methyltransferase superfamily. RsmB/NOP family.

The protein localises to the cytoplasm. The catalysed reaction is cytidine(967) in 16S rRNA + S-adenosyl-L-methionine = 5-methylcytidine(967) in 16S rRNA + S-adenosyl-L-homocysteine + H(+). Its function is as follows. Specifically methylates the cytosine at position 967 (m5C967) of 16S rRNA. This Salmonella arizonae (strain ATCC BAA-731 / CDC346-86 / RSK2980) protein is Ribosomal RNA small subunit methyltransferase B.